Reading from the N-terminus, the 297-residue chain is Bifunctional protein FolD (297 aa).

Residues glycine 164–serine 166, serine 193, and isoleucine 234 contribute to the NADP(+) site.

The protein belongs to the tetrahydrofolate dehydrogenase/cyclohydrolase family. In terms of assembly, homodimer.

The catalysed reaction is (6R)-5,10-methylene-5,6,7,8-tetrahydrofolate + NADP(+) = (6R)-5,10-methenyltetrahydrofolate + NADPH. It carries out the reaction (6R)-5,10-methenyltetrahydrofolate + H2O = (6R)-10-formyltetrahydrofolate + H(+). Its pathway is one-carbon metabolism; tetrahydrofolate interconversion. Its function is as follows. Catalyzes the oxidation of 5,10-methylenetetrahydrofolate to 5,10-methenyltetrahydrofolate and then the hydrolysis of 5,10-methenyltetrahydrofolate to 10-formyltetrahydrofolate. The chain is Bifunctional protein FolD from Halobacterium salinarum (strain ATCC 700922 / JCM 11081 / NRC-1) (Halobacterium halobium).